Here is a 162-residue protein sequence, read N- to C-terminus: NADH-quinone oxidoreductase subunit C (162 aa).

This sequence belongs to the complex I 30 kDa subunit family. In terms of assembly, NDH-1 is composed of 14 different subunits. Subunits NuoB, C, D, E, F, and G constitute the peripheral sector of the complex.

It is found in the cell inner membrane. The catalysed reaction is a quinone + NADH + 5 H(+)(in) = a quinol + NAD(+) + 4 H(+)(out). Functionally, NDH-1 shuttles electrons from NADH, via FMN and iron-sulfur (Fe-S) centers, to quinones in the respiratory chain. The immediate electron acceptor for the enzyme in this species is believed to be ubiquinone. Couples the redox reaction to proton translocation (for every two electrons transferred, four hydrogen ions are translocated across the cytoplasmic membrane), and thus conserves the redox energy in a proton gradient. The sequence is that of NADH-quinone oxidoreductase subunit C from Geobacter sulfurreducens (strain ATCC 51573 / DSM 12127 / PCA).